The following is a 632-amino-acid chain: 1-deoxy-D-xylulose-5-phosphate synthase (632 aa).

A disordered region spans residues Met-1–Asp-25. Thiamine diphosphate contacts are provided by residues His-87 and Gly-128–Ser-130. Residue Asp-159 coordinates Mg(2+). Thiamine diphosphate is bound by residues Gly-160 to Ala-161, Asn-188, Phe-295, and Glu-378. Asn-188 provides a ligand contact to Mg(2+).

This sequence belongs to the transketolase family. DXPS subfamily. Homodimer. Mg(2+) serves as cofactor. Requires thiamine diphosphate as cofactor.

It carries out the reaction D-glyceraldehyde 3-phosphate + pyruvate + H(+) = 1-deoxy-D-xylulose 5-phosphate + CO2. Its pathway is metabolic intermediate biosynthesis; 1-deoxy-D-xylulose 5-phosphate biosynthesis; 1-deoxy-D-xylulose 5-phosphate from D-glyceraldehyde 3-phosphate and pyruvate: step 1/1. Functionally, catalyzes the acyloin condensation reaction between C atoms 2 and 3 of pyruvate and glyceraldehyde 3-phosphate to yield 1-deoxy-D-xylulose-5-phosphate (DXP). This Pseudomonas fluorescens (strain Pf0-1) protein is 1-deoxy-D-xylulose-5-phosphate synthase.